We begin with the raw amino-acid sequence, 219 residues long: uncharacterized protein (219 aa).

3 stretches are compositionally biased toward basic and acidic residues: residues 1-20 (METPIEREIRRSCEREESLR), 30-39 (AGRELVELRV), and 156-170 (QEVRAVREREQELQR). Residues 1–195 (METPIEREIR…PSLTASRGDG (195 aa)) form a disordered region.

The protein belongs to the MISP family.

This is an uncharacterized protein from Homo sapiens (Human).